The following is a 60-amino-acid chain: Homeobox protein engrailed-like A (60 aa).

A DNA-binding region (homeobox) is located at residues 1 to 41 (ADQLARLRAEFQANRYLTEERRQNLARELSLNEAQIKIWFQ).

The protein belongs to the engrailed homeobox family.

The protein localises to the nucleus. The chain is Homeobox protein engrailed-like A from Myxine glutinosa (Atlantic hagfish).